Reading from the N-terminus, the 317-residue chain is Small ribosomal subunit protein uS2 (317 aa).

The interval 277 to 317 is disordered; the sequence is SDWTAPAANPANAAAAGAPAPAPAAATTTESWGGSGAENWG. Low complexity predominate over residues 281-302; sequence APAANPANAAAAGAPAPAPAAA.

The protein belongs to the universal ribosomal protein uS2 family. In terms of assembly, component of the small ribosomal subunit. Mature ribosomes consist of a small (40S) and a large (60S) subunit. The 40S subunit contains about 33 different proteins and 1 molecule of RNA (18S). The 60S subunit contains about 49 different proteins and 3 molecules of RNA (28S, 5.8S and 5S). Interacts with ribosomal protein S21.

Its subcellular location is the cytoplasm. Functionally, required for the assembly and/or stability of the 40S ribosomal subunit. Required for the processing of the 20S rRNA-precursor to mature 18S rRNA in a late step of the maturation of 40S ribosomal subunits. The protein is Small ribosomal subunit protein uS2 of Urechis caupo (Innkeeper worm).